The sequence spans 429 residues: Glutamate-1-semialdehyde 2,1-aminomutase 1 (429 aa).

An N6-(pyridoxal phosphate)lysine modification is found at Lys268.

It belongs to the class-III pyridoxal-phosphate-dependent aminotransferase family. HemL subfamily. In terms of assembly, homodimer. Requires pyridoxal 5'-phosphate as cofactor.

The protein resides in the cytoplasm. It catalyses the reaction (S)-4-amino-5-oxopentanoate = 5-aminolevulinate. It functions in the pathway porphyrin-containing compound metabolism; protoporphyrin-IX biosynthesis; 5-aminolevulinate from L-glutamyl-tRNA(Glu): step 2/2. This chain is Glutamate-1-semialdehyde 2,1-aminomutase 1, found in Listeria innocua serovar 6a (strain ATCC BAA-680 / CLIP 11262).